The following is a 485-amino-acid chain: NADH-quinone oxidoreductase subunit N (485 aa).

14 helical membrane passes run 8 to 28 (LIALLPLLIVGLTVVVVMLSI), 35 to 55 (FLNATLSVIGLNAALVSLWFV), 71 to 91 (GFAMLYTGLVLLASLATCTFA), 105 to 125 (FYLLVLIASLGGILLTNANHL), 127 to 147 (ALFLGIELISLPLFGLIGYAF), 159 to 179 (YTILSAAASSFLLFGMALVYA), 203 to 223 (LLAGFGLMIVGLGFKLSLVPF), 235 to 255 (PAPVSTFLATASKIAIFGVVM), 271 to 291 (VVLGIIAFASIIFGNLMALSQ), 297 to 317 (LLGYSSISHLGYLLVALIALQ), 326 to 346 (VGVYLAGYLFSSLGAFGVVSL), 373 to 393 (AAVMTVMMLSLAGIPMTLGFI), 408 to 430 (WWLVAAVVVGSAIGLYYYLRVAV), and 455 to 475 (IVVLISALLVLVLGVWPQPLI).

The protein belongs to the complex I subunit 2 family. In terms of assembly, NDH-1 is composed of 13 different subunits. Subunits NuoA, H, J, K, L, M, N constitute the membrane sector of the complex.

The protein resides in the cell inner membrane. The catalysed reaction is a quinone + NADH + 5 H(+)(in) = a quinol + NAD(+) + 4 H(+)(out). In terms of biological role, NDH-1 shuttles electrons from NADH, via FMN and iron-sulfur (Fe-S) centers, to quinones in the respiratory chain. The immediate electron acceptor for the enzyme in this species is believed to be ubiquinone. Couples the redox reaction to proton translocation (for every two electrons transferred, four hydrogen ions are translocated across the cytoplasmic membrane), and thus conserves the redox energy in a proton gradient. This is NADH-quinone oxidoreductase subunit N from Salmonella dublin (strain CT_02021853).